The chain runs to 198 residues: Probable host range protein 2 (198 aa).

A disordered region spans residues 171 to 198 (SDDDDDNDNADDDEEDDDEVNDIEDDYE).

This sequence belongs to the poxviridae C7 protein family.

Plays a role for multiplication of the virus in different cell types. In Bos taurus (Bovine), this protein is Probable host range protein 2.